A 558-amino-acid chain; its full sequence is Ankyrin repeat protein OPG189 (558 aa).

7 ANK repeats span residues 65 to 95, 169 to 205, 209 to 239, 243 to 272, 276 to 304, 339 to 368, and 372 to 401; these read YGEN…NINK, YGCT…DVDK, YGNT…NIDS, NRYT…NVNA, FGTT…ELEI, YNET…DFET, and SGCT…SLKI.

It belongs to the orthopoxvirus OPG189 protein family.

Functionally, contributes to viral release without involving rearrangement of host actin. This is Ankyrin repeat protein OPG189 (OPG189) from Homo sapiens (Human).